The following is a 470-amino-acid chain: Sorting nexin-17 (470 aa).

A PX domain is found at 1-109; it reads MHFSIPETES…SFLRRAQQET (109 aa). A 1,2-diacyl-sn-glycero-3-phospho-(1D-myo-inositol-3-phosphate)-binding residues include Arg36, Ser38, Lys62, and Arg75. The Ras-associating domain maps to 115 to 206; that stretch reads EEVSLEVLLS…YKIVLRKSYW (92 aa). The segment at 115-432 is FERM-like; the sequence is EEVSLEVLLS…DATRESMVKL (318 aa). Residues 270-432 form a PTB-like F3 module region; sequence GYLRFDACVA…DATRESMVKL (163 aa). Phosphoserine occurs at positions 336, 407, 409, 415, 421, 437, and 440. Positions 400 to 425 are disordered; it reads VGGTLRRSDSQQAVKSPPLLESPDAT.

This sequence belongs to the sorting nexin family. In terms of assembly, monomer. Interacts with APP (via cytoplasmic YXNPXY motif). Interacts with KIF1B. Interacts with the C-termini of P-selectin, PTC, LDLR, VLDLR, LRP1 and LRP8. Interacts with KRIT1 (via N-terminus). Interacts with HRAS. Interacts with ITGB1 and ITGB5 (via NPxY motif). Interacts with CCDC22 and CCDC93; the interaction associates SNX17 with the CCC complex. Interacts (via C-terminus) with VPS26C and VPS35L; the interactions are direct and associate SNX17 with the retriever complex.

It is found in the cytoplasm. The protein localises to the early endosome. The protein resides in the cytoplasmic vesicle membrane. Functionally, critical regulator of endosomal recycling of numerous surface proteins, including integrins, signaling receptor and channels. Binds to NPxY sequences in the cytoplasmic tails of target cargos. Associates with retriever and CCC complexes to prevent lysosomal degradation and promote cell surface recycling of numerous cargos such as integrins ITGB1, ITGB5 and their associated alpha subunits. Also required for maintenance of normal cell surface levels of APP and LRP1. Interacts with membranes containing phosphatidylinositol 3-phosphate (PtdIns(3P)). The protein is Sorting nexin-17 (SNX17) of Pongo abelii (Sumatran orangutan).